A 457-amino-acid polypeptide reads, in one-letter code: UDP-glycosyltransferase 74C1 (457 aa).

UDP-alpha-D-glucose is bound by residues threonine 281, 336–338 (VPQ), 353–361 (HCGWNSTLE), and 375–378 (WTDQ).

It belongs to the UDP-glycosyltransferase family.

The protein is UDP-glycosyltransferase 74C1 (UGT74C1) of Arabidopsis thaliana (Mouse-ear cress).